The following is a 310-amino-acid chain: Ornithine carbamoyltransferase (310 aa).

Residues 56–59 (STRT), glutamine 83, arginine 107, and 134–137 (HPCQ) each bind carbamoyl phosphate. Residues asparagine 165, aspartate 229, and 233–234 (SM) contribute to the L-ornithine site. Residues 269-270 (CL) and arginine 297 each bind carbamoyl phosphate.

This sequence belongs to the aspartate/ornithine carbamoyltransferase superfamily. OTCase family.

It localises to the cytoplasm. The enzyme catalyses carbamoyl phosphate + L-ornithine = L-citrulline + phosphate + H(+). It functions in the pathway amino-acid biosynthesis; L-arginine biosynthesis; L-arginine from L-ornithine and carbamoyl phosphate: step 1/3. Its function is as follows. Reversibly catalyzes the transfer of the carbamoyl group from carbamoyl phosphate (CP) to the N(epsilon) atom of ornithine (ORN) to produce L-citrulline. The sequence is that of Ornithine carbamoyltransferase from Symbiobacterium thermophilum (strain DSM 24528 / JCM 14929 / IAM 14863 / T).